Here is a 276-residue protein sequence, read N- to C-terminus: Undecaprenyl-diphosphatase (276 aa).

8 consecutive transmembrane segments (helical) span residues 1 to 21 (MELY…FLPV), 40 to 60 (ALSF…LVFF), 93 to 113 (VRLA…GLIL), 120 to 140 (LFSS…FLWL), 154 to 174 (IGFG…IPGI), 199 to 219 (FLLS…ESFA), 227 to 247 (VTLL…VALL), and 255 to 275 (FYLF…AGFV).

The protein belongs to the UppP family.

Its subcellular location is the cell inner membrane. The enzyme catalyses di-trans,octa-cis-undecaprenyl diphosphate + H2O = di-trans,octa-cis-undecaprenyl phosphate + phosphate + H(+). In terms of biological role, catalyzes the dephosphorylation of undecaprenyl diphosphate (UPP). Confers resistance to bacitracin. In Desulforapulum autotrophicum (strain ATCC 43914 / DSM 3382 / VKM B-1955 / HRM2) (Desulfobacterium autotrophicum), this protein is Undecaprenyl-diphosphatase.